Consider the following 330-residue polypeptide: MAKAPVNVTVTGAAGQIGYALLFRIASGQLLGVDTPVRLRLLEIPQAIKAAEGTAMELDDCAFPLLAGVDIYDDPRKAFDGVNVALLVGARPRTKGMERRDLLEANGGIFGPQGAAINDGAADDVRVLVVGNPANTNALIAQAHAPDIPADRFTAMTRLDHNRALSQLAAKLNVSVSDIKKLTIWGNHSATQYPDIFHAEVNGRSAVEAVNDEEWLRDTFIPTVAKRGAAIIEARGASSAASAANAAIDHVYDWVNGTPEGDWTSVALPSDGSYGVPEGLVSSFPVVSRNGSWEIVQGLEINEFSRERIDASVRELEEEREAVRALGLIK.

An NAD(+)-binding site is contributed by 12–18 (GAAGQIG). Arg-93 and Arg-99 together coordinate substrate. Residues Asn-106, Gln-113, and 130 to 132 (VGN) each bind NAD(+). Substrate is bound by residues Asn-132 and Arg-163. His-188 (proton acceptor) is an active-site residue.

Belongs to the LDH/MDH superfamily. MDH type 2 family.

It catalyses the reaction (S)-malate + NAD(+) = oxaloacetate + NADH + H(+). Its function is as follows. Catalyzes the reversible oxidation of malate to oxaloacetate. The polypeptide is Malate dehydrogenase (Thermobifida fusca (strain YX)).